The sequence spans 360 residues: Molybdenum import ATP-binding protein ModC (360 aa).

Residues 5–234 enclose the ABC transporter domain; sequence VKLHLGYQDF…LDLPLALGDD (230 aa). Residue 32–39 participates in ATP binding; the sequence is GHSGSGKT. In terms of domain architecture, Mop spans 295–360; that stretch reads HSSILNRLPV…AQIKAVAVLA (66 aa).

The protein belongs to the ABC transporter superfamily. Molybdate importer (TC 3.A.1.8) family. As to quaternary structure, the complex is composed of two ATP-binding proteins (ModC), two transmembrane proteins (ModB) and a solute-binding protein (ModA).

It localises to the cell inner membrane. It catalyses the reaction molybdate(out) + ATP + H2O = molybdate(in) + ADP + phosphate + H(+). Part of the ABC transporter complex ModABC involved in molybdenum import. Responsible for energy coupling to the transport system. This is Molybdenum import ATP-binding protein ModC from Pseudomonas fluorescens (strain ATCC BAA-477 / NRRL B-23932 / Pf-5).